Reading from the N-terminus, the 364-residue chain is Coproporphyrin III ferrochelatase (364 aa).

Fe-coproporphyrin III-binding residues include R29 and Y118. Fe(2+) contacts are provided by H169 and E250.

The protein belongs to the ferrochelatase family.

The protein resides in the cytoplasm. The enzyme catalyses Fe-coproporphyrin III + 2 H(+) = coproporphyrin III + Fe(2+). It functions in the pathway porphyrin-containing compound metabolism; protoheme biosynthesis. In terms of biological role, involved in coproporphyrin-dependent heme b biosynthesis. Catalyzes the insertion of ferrous iron into coproporphyrin III to form Fe-coproporphyrin III. This is Coproporphyrin III ferrochelatase from Streptococcus pneumoniae (strain Taiwan19F-14).